We begin with the raw amino-acid sequence, 102 residues long: Salivary thrombin inhibitor anophelin (102 aa).

The N-terminal stretch at 1-21 is a signal peptide; it reads MATKLIVIAFLCAALIAVVQS. Positions 25-102 are disordered; it reads YAQGEEPTYD…SDSSSESTEH (78 aa). Residues 59–69 show a composition bias toward polar residues; it reads SQLTEYANTAQ. The tract at residues 70–73 is blocks active site cleft of host thrombin in a reverse direction compared to substrates; it reads DPGR. Residues 80-90 are compositionally biased toward polar residues; the sequence is QANSNNGDQLP. Over residues 91–102 the composition is skewed to low complexity; that stretch reads SQSDSSSESTEH.

Belongs to the anophelin family. Interacts with human F2 (thrombin); the interaction results in thrombin inhibition.

The protein localises to the secreted. Its function is as follows. Salivary protein with anticoagulant activity that inhibits host thrombin (F2). The protein is Salivary thrombin inhibitor anophelin of Anopheles funestus (African malaria mosquito).